A 449-amino-acid chain; its full sequence is 23S rRNA (uracil(1939)-C(5))-methyltransferase RlmD (449 aa).

In terms of domain architecture, TRAM spans 1-66; that stretch reads MGRSRHHNKL…AKFDEAKVVE (66 aa). [4Fe-4S] cluster-binding residues include C79, C85, C88, and C169. Residues Q280, F309, N314, E330, N357, and D379 each contribute to the S-adenosyl-L-methionine site. The active-site Nucleophile is the C405.

The protein belongs to the class I-like SAM-binding methyltransferase superfamily. RNA M5U methyltransferase family. RlmD subfamily.

The catalysed reaction is uridine(1939) in 23S rRNA + S-adenosyl-L-methionine = 5-methyluridine(1939) in 23S rRNA + S-adenosyl-L-homocysteine + H(+). Functionally, catalyzes the formation of 5-methyl-uridine at position 1939 (m5U1939) in 23S rRNA. This Francisella tularensis subsp. tularensis (strain FSC 198) protein is 23S rRNA (uracil(1939)-C(5))-methyltransferase RlmD.